Here is a 396-residue protein sequence, read N- to C-terminus: Argininosuccinate synthase (396 aa).

ATP is bound at residue 9–17; it reads AYSGGLDTS. An L-citrulline-binding site is contributed by Tyr85. Gly115 is an ATP binding site. L-aspartate contacts are provided by Thr117, Asn121, and Asp122. Asn121 is a binding site for L-citrulline. Residues Arg125, Ser173, Glu258, and Tyr270 each contribute to the L-citrulline site.

This sequence belongs to the argininosuccinate synthase family. Type 1 subfamily. In terms of assembly, homotetramer.

It localises to the cytoplasm. The catalysed reaction is L-citrulline + L-aspartate + ATP = 2-(N(omega)-L-arginino)succinate + AMP + diphosphate + H(+). Its pathway is amino-acid biosynthesis; L-arginine biosynthesis; L-arginine from L-ornithine and carbamoyl phosphate: step 2/3. The chain is Argininosuccinate synthase from Streptococcus mutans serotype c (strain ATCC 700610 / UA159).